A 728-amino-acid chain; its full sequence is Catalase-peroxidase 1 (728 aa).

The signal sequence occupies residues 1–22; it reads MDKTQSSQGKCPVMHGANSAVA. Residues 97-225 constitute a cross-link (tryptophyl-tyrosyl-methioninium (Trp-Tyr) (with M-251)); that stretch reads WHSAGTYRVA…LAAVMMGLIY (129 aa). The active-site Proton acceptor is the His-98. Residues 225 to 251 constitute a cross-link (tryptophyl-tyrosyl-methioninium (Tyr-Met) (with W-97)); the sequence is YVNPEGVDGKPDPLRTAQDVRVTFARM. A heme b-binding site is contributed by His-266.

The protein belongs to the peroxidase family. Peroxidase/catalase subfamily. Homodimer or homotetramer. It depends on heme b as a cofactor. In terms of processing, formation of the three residue Trp-Tyr-Met cross-link is important for the catalase, but not the peroxidase activity of the enzyme.

The catalysed reaction is H2O2 + AH2 = A + 2 H2O. The enzyme catalyses 2 H2O2 = O2 + 2 H2O. Bifunctional enzyme with both catalase and broad-spectrum peroxidase activity. This is Catalase-peroxidase 1 from Shewanella sp. (strain MR-7).